Reading from the N-terminus, the 87-residue chain is uncharacterized protein (87 aa).

The disordered stretch occupies residues 52–87; the sequence is KWQPRPDANNSDTTTSTEDSTTDTETEYSTTEDELA. Over residues 71-87 the composition is skewed to acidic residues; it reads STTDTETEYSTTEDELA.

This is an uncharacterized protein from Autographa californica nuclear polyhedrosis virus (AcMNPV).